Consider the following 385-residue polypeptide: S-adenosylmethionine synthase (385 aa).

Histidine 16 is an ATP binding site. Aspartate 18 is a binding site for Mg(2+). Glutamate 44 is a K(+) binding site. L-methionine-binding residues include glutamate 57 and glutamine 100. The tract at residues 100–110 (QSPDINQGVDR) is flexible loop. Residues 164-166 (DGK), 230-231 (KF), aspartate 239, 245-246 (RK), alanine 262, and lysine 266 each bind ATP. Aspartate 239 lines the L-methionine pocket. Lysine 270 contacts L-methionine.

Belongs to the AdoMet synthase family. As to quaternary structure, homotetramer; dimer of dimers. Mg(2+) is required as a cofactor. The cofactor is K(+).

It localises to the cytoplasm. The catalysed reaction is L-methionine + ATP + H2O = S-adenosyl-L-methionine + phosphate + diphosphate. It functions in the pathway amino-acid biosynthesis; S-adenosyl-L-methionine biosynthesis; S-adenosyl-L-methionine from L-methionine: step 1/1. Catalyzes the formation of S-adenosylmethionine (AdoMet) from methionine and ATP. The overall synthetic reaction is composed of two sequential steps, AdoMet formation and the subsequent tripolyphosphate hydrolysis which occurs prior to release of AdoMet from the enzyme. The polypeptide is S-adenosylmethionine synthase (Helicobacter pylori (strain ATCC 700392 / 26695) (Campylobacter pylori)).